The chain runs to 222 residues: Large ribosomal subunit protein mL64 (222 aa).

2 disordered regions span residues 14 to 40 (LTATLAPGSRGYRAPPPPRREPGPWWP) and 188 to 222 (KRLKEEKQRQKQEARAAALAAAAAQDPAASGAPSS). Positions 144–213 (EKAQADKERR…AALAAAAAQD (70 aa)) form a coiled coil. The short motif at 184-200 (KKERKRLKEEKQRQKQE) is the Nuclear localization signal element. Positions 188–201 (KRLKEEKQRQKQEA) are enriched in basic and acidic residues. The span at 202 to 216 (RAAALAAAAAQDPAA) shows a compositional bias: low complexity.

Belongs to the mitochondrion-specific ribosomal protein mL64 family. Component of the mitochondrial ribosome large subunit (39S) which comprises a 16S rRNA and about 50 distinct proteins. Interacts with GADD45A, GADD45B and GADD45G. Interacts with NR4A1 via the NR4A1 AB domain. Interacts with ATAD3A and ATAD3B.

The protein resides in the mitochondrion. It localises to the nucleus. Its function is as follows. Acts as a negative regulator of G1 to S cell cycle phase progression by inhibiting cyclin-dependent kinases. Inhibitory effects are additive with GADD45 proteins but also occur in the absence of GADD45 proteins. Acts as a repressor of the orphan nuclear receptor NR4A1 by inhibiting AB domain-mediated transcriptional activity. May be involved in the hormone-mediated regulation of NR4A1 transcriptional activity. May play a role in mitochondrial protein synthesis. The chain is Large ribosomal subunit protein mL64 (GADD45GIP1) from Chlorocebus aethiops (Green monkey).